The primary structure comprises 382 residues: Lipid-A-disaccharide synthase (382 aa).

This sequence belongs to the LpxB family.

It catalyses the reaction 2-N,3-O-bis[(3R)-3-hydroxytetradecanoyl]-alpha-D-glucosaminyl 1-phosphate + UDP-2-N,3-O-bis[(3R)-3-hydroxytetradecanoyl]-alpha-D-glucosamine = lipid A disaccharide (E. coli) + UDP + H(+). The enzyme catalyses a lipid X + a UDP-2-N,3-O-bis[(3R)-3-hydroxyacyl]-alpha-D-glucosamine = a lipid A disaccharide + UDP + H(+). It functions in the pathway glycolipid biosynthesis; lipid IV(A) biosynthesis; lipid IV(A) from (3R)-3-hydroxytetradecanoyl-[acyl-carrier-protein] and UDP-N-acetyl-alpha-D-glucosamine: step 5/6. In terms of biological role, condensation of UDP-2,3-diacylglucosamine and 2,3-diacylglucosamine-1-phosphate to form lipid A disaccharide, a precursor of lipid A, a phosphorylated glycolipid that anchors the lipopolysaccharide to the outer membrane of the cell. The sequence is that of Lipid-A-disaccharide synthase from Escherichia coli (strain K12 / MC4100 / BW2952).